The following is a 728-amino-acid chain: Ferric reduction oxidase 8, mitochondrial (728 aa).

A mitochondrion-targeting transit peptide spans 1-24 (MAKVLTLLVLRLLMNLLLIGWISL). The next 5 helical transmembrane spans lie at 56-74 (FAVFSFPPIALSIVGLIYL), 104-127 (IGIVSCFEILALLLFLLFLAWNFY), 194-217 (YHVWFGTGLIFFSLVHGGSTLFIW), 269-293 (THHLYIVFLVAFLFHAGDRHFYWVL), and 316-336 (ILSANLFSCKAIELVLPKDPM). The Ferric oxidoreductase domain maps to 159–281 (FGLLAEACLS…LYIVFLVAFL (123 aa)). The heme site is built by histidine 195, histidine 209, histidine 270, and histidine 283. An FAD-binding FR-type domain is found at 300–418 (GLDKILRIVQ…EGPYGPASVD (119 aa)). An FAD-binding site is contributed by 358–361 (HPFS). 410–413 (GPYG) serves as a coordination point for NAD(+). The next 2 helical transmembrane spans lie at 537-559 (FRWLATLVLITVLTFLGFLIGLS) and 595-616 (DLIIIVSYVIAISVGGFAATIL).

The protein belongs to the ferric reductase (FRE) family. FAD is required as a cofactor. In terms of tissue distribution, expressed in shoots. Detected in roots, pedicels, flowers, siliques and leaf veins.

Its subcellular location is the mitochondrion membrane. The enzyme catalyses 2 a Fe(II)-siderophore + NAD(+) + H(+) = 2 a Fe(III)-siderophore + NADH. Its function is as follows. Ferric chelate reductase probably involved in iron reduction in leaf veins for transport. May participate in the transport of electrons to a Fe(3+) ion via FAD and heme intermediates. The chain is Ferric reduction oxidase 8, mitochondrial (FRO8) from Arabidopsis thaliana (Mouse-ear cress).